The primary structure comprises 639 residues: Coiled-coil domain-containing protein 27 (639 aa).

The interval 154–176 is disordered; it reads YPRKRSEPSDPSPTGSPTVVKKS. Positions 203–242 form a coiled coil; the sequence is QRFSEMESQMQKKDQEILTLQKEKEALKKQLKNLLRGKGT. Positions 291–385 are disordered; sequence ESSKELHVEP…EECHPKRSYS (95 aa). Positions 292–309 are enriched in basic and acidic residues; sequence SSKELHVEPGSAIEEKSS. Low complexity predominate over residues 310-320; sequence EGPPEEAAAAK. Composition is skewed to acidic residues over residues 336-350 and 358-369; these read GPEE…EVEG and EGEILVNEEEAS. The span at 370-380 shows a compositional bias: basic and acidic residues; sequence WELREDEECHP.

The polypeptide is Coiled-coil domain-containing protein 27 (Ccdc27) (Mus musculus (Mouse)).